The sequence spans 415 residues: Gamma-glutamyl phosphate reductase (415 aa).

The protein belongs to the gamma-glutamyl phosphate reductase family.

Its subcellular location is the cytoplasm. The enzyme catalyses L-glutamate 5-semialdehyde + phosphate + NADP(+) = L-glutamyl 5-phosphate + NADPH + H(+). The protein operates within amino-acid biosynthesis; L-proline biosynthesis; L-glutamate 5-semialdehyde from L-glutamate: step 2/2. Catalyzes the NADPH-dependent reduction of L-glutamate 5-phosphate into L-glutamate 5-semialdehyde and phosphate. The product spontaneously undergoes cyclization to form 1-pyrroline-5-carboxylate. This is Gamma-glutamyl phosphate reductase from Parabacteroides distasonis (strain ATCC 8503 / DSM 20701 / CIP 104284 / JCM 5825 / NCTC 11152).